We begin with the raw amino-acid sequence, 126 residues long: Calcitonin receptor-stimulating peptide 1 (126 aa).

A signal peptide spans 1 to 25 (MGFWKFPPFLVLSILVLYQAGMFHT). Residues 26 to 78 (APMRSAFGSPFDPATLSEEESRLLLAAMVNDYEQMKAREMQKQRAQGSGISVQ) constitute a propeptide that is removed on maturation. An intrachain disulfide couples cysteine 82 to cysteine 87. Glycine 118 carries the post-translational modification Glycine amide. Residues 123–126 (NFWI) constitute a propeptide that is removed on maturation.

As to expression, mainly expressed in the thyroid gland and CNS. Found in the nerve cells of cerebrum, hippocampus, hypothalamus, pons/midbrain and thalamus.

It localises to the secreted. Functionally, stimulates cAMP production in porcine kidney cell line LLC-PK1 via the calcitonin receptor (CT) but not via the CT-like (CL) receptor. This is Calcitonin receptor-stimulating peptide 1 (CRSP1) from Sus scrofa (Pig).